Here is a 363-residue protein sequence, read N- to C-terminus: UDP-N-acetylglucosamine--N-acetylmuramyl-(pentapeptide) pyrophosphoryl-undecaprenol N-acetylglucosamine transferase (363 aa).

UDP-N-acetyl-alpha-D-glucosamine-binding positions include 12–14 (TAG), Arg166, Ser196, and Gln291.

Belongs to the glycosyltransferase 28 family. MurG subfamily.

Its subcellular location is the cell inner membrane. The enzyme catalyses di-trans,octa-cis-undecaprenyl diphospho-N-acetyl-alpha-D-muramoyl-L-alanyl-D-glutamyl-meso-2,6-diaminopimeloyl-D-alanyl-D-alanine + UDP-N-acetyl-alpha-D-glucosamine = di-trans,octa-cis-undecaprenyl diphospho-[N-acetyl-alpha-D-glucosaminyl-(1-&gt;4)]-N-acetyl-alpha-D-muramoyl-L-alanyl-D-glutamyl-meso-2,6-diaminopimeloyl-D-alanyl-D-alanine + UDP + H(+). It functions in the pathway cell wall biogenesis; peptidoglycan biosynthesis. Functionally, cell wall formation. Catalyzes the transfer of a GlcNAc subunit on undecaprenyl-pyrophosphoryl-MurNAc-pentapeptide (lipid intermediate I) to form undecaprenyl-pyrophosphoryl-MurNAc-(pentapeptide)GlcNAc (lipid intermediate II). The protein is UDP-N-acetylglucosamine--N-acetylmuramyl-(pentapeptide) pyrophosphoryl-undecaprenol N-acetylglucosamine transferase of Legionella pneumophila (strain Paris).